A 222-amino-acid chain; its full sequence is UPF0758 protein YicR (222 aa).

Positions 100-222 constitute an MPN domain; it reads PLLSPEMTRE…YVSFAERGWI (123 aa). Zn(2+)-binding residues include His171, His173, and Asp184. The JAMM motif signature appears at 171 to 184; sequence HNHPSGCAEPSKAD.

The protein belongs to the UPF0758 family. YicR subfamily.

The polypeptide is UPF0758 protein YicR (Shigella dysenteriae serotype 1 (strain Sd197)).